Here is a 284-residue protein sequence, read N- to C-terminus: Bifunctional protein FolD (284 aa).

NADP(+)-binding positions include 166-168 and I232; that span reads GAS.

Belongs to the tetrahydrofolate dehydrogenase/cyclohydrolase family. Homodimer.

It catalyses the reaction (6R)-5,10-methylene-5,6,7,8-tetrahydrofolate + NADP(+) = (6R)-5,10-methenyltetrahydrofolate + NADPH. The enzyme catalyses (6R)-5,10-methenyltetrahydrofolate + H2O = (6R)-10-formyltetrahydrofolate + H(+). It participates in one-carbon metabolism; tetrahydrofolate interconversion. Its function is as follows. Catalyzes the oxidation of 5,10-methylenetetrahydrofolate to 5,10-methenyltetrahydrofolate and then the hydrolysis of 5,10-methenyltetrahydrofolate to 10-formyltetrahydrofolate. The chain is Bifunctional protein FolD from Shewanella halifaxensis (strain HAW-EB4).